We begin with the raw amino-acid sequence, 382 residues long: Ribosomal RNA large subunit methyltransferase G (382 aa).

The protein belongs to the methyltransferase superfamily. RlmG family.

Its subcellular location is the cytoplasm. The catalysed reaction is guanosine(1835) in 23S rRNA + S-adenosyl-L-methionine = N(2)-methylguanosine(1835) in 23S rRNA + S-adenosyl-L-homocysteine + H(+). In terms of biological role, specifically methylates the guanine in position 1835 (m2G1835) of 23S rRNA. In Psychromonas ingrahamii (strain DSM 17664 / CCUG 51855 / 37), this protein is Ribosomal RNA large subunit methyltransferase G.